We begin with the raw amino-acid sequence, 919 residues long: MTGYTMLRNGGAGNGGQTCMLRWSNRIRLTWLSFTLFVILVFFPLIAHYYLTTLDEADEAGKRIFGPRVGNELCEVKHVLDLCRIRESVSEELLQLEAKRQELNSEIAKLNLKIEACKKSIENAKQDLLQLKNVISQTEHSYKELMAQNQPKLSLPIRLLPEKDDAGLPPPKATRGCRLHNCFDYSRCPLTSGFPVYVYDSDQFVFGSYLDPLVKQAFQATARANVYVTENADIACLYVILVGEMQEPVVLRPAELEKQLYSLPHWRTDGHNHVIINLSRKSDTQNLLYNVSTGRAMVAQSTFYTVQYRPGFDLVVSPLVHAMSEPNFMEIPPQVPVKRKYLFTFQGEKIESLRSSLQEARSFEEEMEGDPPADYDDRIIATLKAVQDSKLDQVLVEFTCKNQPKPSLPTEWALCGEREDRLELLKLSTFALIITPGDPRLVISSGCATRLFEALEVGAVPVVLGEQVQLPYQDMLQWNEAALVVPKPRVTEVHFLLRSLSDSDLLAMRRQGRFLWETYFSTADSIFNTVLAMIRTRIQIPAAPIREEAAAEIPHRSGKAAGTDPNMADNGDLDLGPVETEPPYASPRYLRNFTLTVTDFYRSWNCAPGPFHLFPHTPFDPVLPSEAKFLGSGTGFRPIGGGAGGSGKEFQAALGGNVPREQFTVVMLTYEREEVLMNSLERLNGLPYLNKVVVVWNSPKLPSEDLLWPDIGVPIMVVRTEKNSLNNRFLPWNEIETEAILSIDDDAHLRHDEIMFGFRVWREARDRIVGFPGRYHAWDIPHQSWLYNSNYSCELSMVLTGAAFFHKYYAYLYSYVMPQAIRDMVDEYINCEDIAMNFLVSHITRKPPIKVTSRWTFRCPGCPQALSHDDSHFHERHKCINFFVKVYGYMPLLYTQFRVDSVLFKTRLPHDKTKCFKFI.

At 1 to 30 (MTGYTMLRNGGAGNGGQTCMLRWSNRIRLT) the chain is on the cytoplasmic side. The tract at residues 1-140 (MTGYTMLRNG…LKNVISQTEH (140 aa)) is required for interaction with REG3A. The helical; Signal-anchor for type II membrane protein transmembrane segment at 31–51 (WLSFTLFVILVFFPLIAHYYL) threads the bilayer. Over 52 to 919 (TTLDEADEAG…HDKTKCFKFI (868 aa)) the chain is Lumenal. Disulfide bonds link Cys-177–Cys-182 and Cys-188–Cys-236. N-linked (GlcNAc...) asparagine glycosylation occurs at Asn-290. Residue Ser-362 is modified to Phosphoserine. Cys-400 and Cys-415 are oxidised to a cystine. Asn-592 carries an N-linked (GlcNAc...) asparagine glycan. Positions 668, 672, 697, 723, 728, 744, 745, and 746 each coordinate UDP-N-acetyl-alpha-D-glucosamine. Mn(2+) is bound at residue Asp-746. N-linked (GlcNAc...) asparagine glycosylation is present at Asn-790. Cys-831 and Cys-879 are oxidised to a cystine. UDP-N-acetyl-alpha-D-glucosamine-binding residues include Glu-832, Asp-833, and Arg-876. Asp-833 is an active-site residue.

The protein belongs to the glycosyltransferase 47 family. Homodimer; disulfide-linked. Interacts with REG3A. Mn(2+) serves as cofactor. In terms of tissue distribution, ubiquitous. Expressed in keratinocytes. Expressed in pancreas.

It is found in the endoplasmic reticulum membrane. The protein resides in the golgi apparatus. It localises to the cell membrane. Its subcellular location is the nucleus. It carries out the reaction 3-O-(beta-D-GlcA-(1-&gt;3)-beta-D-Gal-(1-&gt;3)-beta-D-Gal-(1-&gt;4)-beta-D-Xyl)-L-seryl-[protein] + UDP-N-acetyl-alpha-D-glucosamine = 3-O-(alpha-D-GlcNAc-(1-&gt;4)-beta-D-GlcA-(1-&gt;3)-beta-D-Gal-(1-&gt;3)-beta-D-Gal-(1-&gt;4)-beta-D-Xyl)-L-seryl-[protein] + UDP + H(+). It participates in glycan metabolism; heparan sulfate biosynthesis. In terms of biological role, glycosyltransferase which regulates the biosynthesis of heparan sulfate (HS). Initiates HS synthesis by transferring the first N-acetyl-alpha-D-glucosamine (alpha-GlcNAc) residue (GlcNAcT-I activity) to the tetrasaccharide linker (GlcA-Gal-Gal-Xyl-)Ser core linker. May also transfer alpha-GlcNAc residues during HS elongation (GlcNAcT-II activity). Lacks glucuronyl transferase II (GlcAT-II) activity. Important for both skeletal development and hematopoiesis, through the formation of HS proteoglycans (HSPGs). Through the synthesis of HS, regulates postnatal pancreatic islet maturation and insulin secretion. Functionally, receptor for REG3A, REG3B and REG3G, induces the activation of downstream signaling pathways such as PI3K-AKT or RAS-RAF-MEK-ERK signaling pathway. Required for the function of REG3A in regulating keratinocyte proliferation and differentiation. Required for the inhibition of skin inflammation mediated by REG3A through the activation of PI3K-AKT-STAT3 pathway. Required for the function of REG3A and REG3G in glucose tolerance in pancreas. Expressed in microglia, is activated by nociceptor-derived REG3G in response to endotoxins, leading to the inhibition of kynurenine pathway to prevent endotoxic death. The polypeptide is Exostosin-like 3 (Homo sapiens (Human)).